The primary structure comprises 738 residues: MTDAPFDRADIDALLGARHPDPFACLGPHRVGDATVVRTLLPGALRVRAIAAGGGVLGELRQVDPAGCFAGALPDGQERGERPRYRLSIDWPDARQDVEDAYAFGTLLDEDALARFAAGDPRAALACLGARALDMDGVPGVRFAVWAPGASRVSVVGDFNGWDARRHPMRLRRPWGVWELFVPRIGAGERYKFALRARDGAALPLKADPCACRTEAPPRTASIVADLDALERFGWHDDAWLRARASLDLAHAPVSIYEVHPESWLRVAAEGNRSATWDELAQRLIPYAAGMGFSHVELTPIAEYPFGGSWGYQSLSPFAPSARFGPPEGFARFVEHAHAAGLGVIVDWVPAHFPDDPHGLGKFDGTALFEHADPREGWHPDWHTHVFNVGRREVGAFLIASALAWAHRYHVDGIRVDAVASMLYRDYSRAAGEWVPNVYGGRENLESIAFLKHFNDTLHGPAAPPGVATFAEESTAWPGVTAPTAEHGLGFDFKWNMGWMHDTLAYLREDPIHRRHHHDRLTFGLVYAFSERFVLPLSHDEVVHGKGSLAAKMPGDAWQRLANLRAYFGFMWAHPGKKLLFMGGEFAQWGEFAHDATPQWDLLDAPAHRGVQRLVRDLNRLHAAEPALHALDDRPAGFAWLVGDDRNNSVFAFVRRDDAGRMLVAVCNFTPVPRTDYRLGLPAPGRWAEVLNTDGAAYGGTDAGNGGAVQADEIPAHGERWSAALRLPPLATLWLRPA.

Aspartate 417 functions as the Nucleophile in the catalytic mechanism. The active-site Proton donor is the glutamate 472.

This sequence belongs to the glycosyl hydrolase 13 family. GlgB subfamily. As to quaternary structure, monomer.

The enzyme catalyses Transfers a segment of a (1-&gt;4)-alpha-D-glucan chain to a primary hydroxy group in a similar glucan chain.. Its pathway is glycan biosynthesis; glycogen biosynthesis. In terms of biological role, catalyzes the formation of the alpha-1,6-glucosidic linkages in glycogen by scission of a 1,4-alpha-linked oligosaccharide from growing alpha-1,4-glucan chains and the subsequent attachment of the oligosaccharide to the alpha-1,6 position. The chain is 1,4-alpha-glucan branching enzyme GlgB from Burkholderia pseudomallei (strain K96243).